The following is a 51-amino-acid chain: Large ribosomal subunit protein bL33 (51 aa).

The interval 1 to 23 (MREKIKLESSAGTGHFYTTTKNK) is disordered. The span at 10-20 (SAGTGHFYTTT) shows a compositional bias: polar residues.

The protein belongs to the bacterial ribosomal protein bL33 family.

In Methylobacillus flagellatus (strain ATCC 51484 / DSM 6875 / VKM B-1610 / KT), this protein is Large ribosomal subunit protein bL33.